A 397-amino-acid chain; its full sequence is Serine/threonine-protein kinase 17A (397 aa).

Residues 1–23 form a disordered region; the sequence is MIPLEKPGSGGSPSAAASGSGPG. The residue at position 9 (serine 9) is a Phosphoserine. Positions 44 to 304 constitute a Protein kinase domain; the sequence is LSPGRELGRG…AEECLKHPWL (261 aa). ATP is bound by residues 50-58 and lysine 73; that span reads LGRGKFAVV. Aspartate 169 acts as the Proton acceptor in catalysis.

It belongs to the protein kinase superfamily. CAMK Ser/Thr protein kinase family. DAP kinase subfamily. Autophosphorylated. Highly expressed in bone marrow. Lower levels in brain, heart, lung, liver and kidney.

The protein resides in the nucleus. The enzyme catalyses L-seryl-[protein] + ATP = O-phospho-L-seryl-[protein] + ADP + H(+). It carries out the reaction L-threonyl-[protein] + ATP = O-phospho-L-threonyl-[protein] + ADP + H(+). With respect to regulation, inhibited by thiazolidinedione-type compounds: inhibited by furan- and pyridone- thiazolidinediones. Acts as a positive regulator of apoptosis. May also act as a regulator of cellular reactive oxygen species. This is Serine/threonine-protein kinase 17A (STK17A) from Oryctolagus cuniculus (Rabbit).